The primary structure comprises 2400 residues: MNSTPRNAQAPSHRECFLPSVARTPSVTKVTPAKKITFLKRGDPRFAGVRLAVHQRAFKTFSALMDELSQRVPLSFGVRSVTTPRGLHSLSALEQLEDGGCYLCSDKKPPKTPSGPGRPQERNPTAQQLRDVEGQREAPGTSSSRKSLKTPRRILLIKNMDPRLQQTVVLSHRNTRNLAAFLGKASDLLRFPVKQLYTTSGKKVDSLQALLHSPSVLVCAGHEAFRTPAMKNARRSEAETLSGLTSRNKNGSWGPKTKPSVIHSRSPPGSTPRLPERPGPSNPPVGPAPGRHPQDTPAQSGPLVAGDDMKKKVRMNEDGSLSVEMKVRFHLVGEDTLLWSRRMGRASALTAASGEDPVLGEVDPLCCVWEGYPWGFSEPGVWGPRPCRVGCREVFGRGGQPGPKYEIWTNPLHASQGERVAARKRWGLAQHVRCSGLWGHGTAGRERCSQDSASPASSTGLPEGSEPESSCCPRTPEDGVDSASPSAQIGAERKAGGSLGEDPGLCIDGAGLGGPEQGGRLTPRARSEEGASSDSSASTGSHEGSSEWGGRPQGCPGKARAETSQQEASEGGDPASPALSLSSLRSDDLQAETQGQGTEQATGAAVTREPLVLGLSCSWDSEGASSTPSTCTSSQQGQRRHRSRASAMSSPSSPGLGRVAPRGHPRHSHYRKDTHSPLDSSVTKQVPRPPERRRACQDGSVPRYSGSSSSTRTQASGNLRPPSSGSLPSQDLLGTSSATVTPAVHSDFVSGVSPHNAPSAGWAGDAGSRTCSPAPIPPHTSDSCSKSGAASLGEEARDTPQPSSPLVLQVGRPEQGAVGPHRSHCCSQPGTQPAQEAQRGPSPEASWLCGRYCPTPPRGRPCPQRRSSSCGSTGSSHQSTARGPGGSPQEGTRQPGPTPSPGPNSGASRRSSASQGAGSRGLSEEKTLRSGGGPQGQEEASGVSPSSLPRSSPEAVVREWLDNIPEEPILMTYELADETTGAAGGGLRGPEVDPGDDHSLEGLGEPAQAGQQSLEGDPGQDPEPEGALLGSSDTGPQSGEGVPQGAAPEGVSEAPAEAGADREAPAGCRVSLRALPGRVSASTQIMRALMGSKQGRPSSVPEVSRPMARRLSCSAGALITCLASLQLFEEDLGSPASKVRFKDSPRYQELLSISKDLWPGCDVGEDQLDSGLWELTWSQALPDLGSHAMTENFTPTSSSGVDISSGSGGSGESSVPCAMDGTLVTQGTELPLKTSNQRPDSRTYESPGDLENQQQCCFPTFLNARACACATNEDEAERDSEEQRASSNLEQLAENTVQEEVQLEETKEGTEGEGLQEEAVQLEETKTEEGLQEEGVQLEETKETEGEGQQEEEAQLEEIEETGGEGLQEEGVQLEEVKEGPEGGLQGEALEEGLKEEGLPEEGSVHGQELSEASSPDGKGSQEDDPVQEEEAGRASASAEPCPAEGTEEPTEPPSHLSETDPSASERQSGSQLEPGLEKPPGATMMGQEHTQAQPTQGAAERSSSVACSAALDCDPIWVSVLLKKTEKAFLAHLASAVAELRARWGLQDNDLLDQMAAELQQDVAQRLQDSTKRELQKLQGRAGRMVLEPPREALTGELLLQTQQRRHRLRGLRNLSAFSERTLGLGPLSFTLEDEPALSTALGSQLGEEAEGEEFCPCEACVRKKVSPMSPKATMGATRGPIKEAFDLQQILQRKRGEHTDGEAAEVAPGKTHTDPTSTRTVQGAEGGLGPGLSQGPGVDEGEDGEGSQRLNRDKDPKLGEAEGDAMAQEREGKTHNSETSAGSELGEAEQEGEGISERGETGGQGSGHEDNLQGEAAAGGDQDPGQSDGAEGIEAPEAEGEAQPESEGVEAPEAEGDAQEAEGEAQPESEDVEAPEAEGEAQPESEDVETPEAEWEVQPESEGAEAPEAEKEAQPETESVEALETEGEDEPESEGAEAQEAEEAAQEAEGQTQPESEVIESQEAEEEAQPESEDVEALEVEVETQEAEGEAQPESEDVEAPEAEGEMQEAEEEAQPESDGVEAQPKSEGEEAQEVEGETQKTEGDAQPESDGVEAPEAEEEAQEAEGEVQEAEGEAHPESEDVDAQEAEGEAQPESEGVEAPEAEGEAQKAEGIEAPETEGEAQPESEGIEAPEAEGEAQPESEGVEAQDAEGEAQPESEGIEAQEAEEEAQPELEGVEAPEAEGEAQPESEGIEAPEAEGEAQPELEGVEAPEAEEEAQPEPEGVETPEAEGEAQPESEGETQGEKKGSPQVSLGDGQSEEASESSSPVPEDRPTPPPSPGGDTPHQRPGSQTGPSSSRASSWGNCWQKDSENDHVLGDTRSPDAKSTGTPHAERKATRMYPESSTSEQEEAPLGSRTPEQGASEGYDLQEDQALGSLAPTEAVGRADGFGQDDLDF.

2 consecutive Doublecortin domains span residues 34-118 (KKIT…GPGR) and 152-231 (RRIL…PAMK). Disordered stretches follow at residues 104-152 (CSDK…KTPR), 230-310 (MKNA…DDMK), 444-1064 (GRER…DREA), 1188-1251 (AMTE…GDLE), 1275-1501 (EAER…GAAE), and 1697-2400 (RGEH…DLDF). A compositionally biased stretch (polar residues) spans 242 to 251 (SGLTSRNKNG). Over residues 277–287 (RPGPSNPPVGP) the composition is skewed to pro residues. Over residues 450-460 (QDSASPASSTG) the composition is skewed to polar residues. Composition is skewed to low complexity over residues 530–543 (GASS…GSHE) and 573–584 (DPASPALSLSSL). Residues 591–601 (AETQGQGTEQA) show a composition bias toward polar residues. Low complexity-rich tracts occupy residues 625 to 637 (SSTP…SQQG) and 645 to 654 (ASAMSSPSSP). The span at 661–670 (PRGHPRHSHY) shows a compositional bias: basic residues. 2 stretches are compositionally biased toward polar residues: residues 711 to 740 (TRTQ…SATV) and 825 to 835 (CCSQPGTQPAQ). Composition is skewed to low complexity over residues 864–880 (QRRS…HQST), 903–921 (PNSG…GSRG), and 941–953 (SGVS…RSSP). Polar residues-rich tracts occupy residues 1223–1238 (LVTQ…SNQR) and 1285–1299 (ASSN…TVQE). A 1-1; approximate repeat occupies 1292–1307 (LAENTVQEEVQLEETK). A 3 X 16 AA approximate tandem repeats of T-E-E-G-L-Q-E-E-G-V-Q-L-E-E-T-K region spans residues 1292 to 1342 (LAENTVQEEVQLEETKEGTEGEGLQEEAVQLEETKTEEGLQEEGVQLEETK). One copy of the 1-2; approximate repeat lies at 1310 to 1326 (TEGEGLQEEAVQLEETK). The 1-3 repeat unit spans residues 1327 to 1342 (TEEGLQEEGVQLEETK). Positions 1346-1363 (GEGQQEEEAQLEEIEETG) are enriched in acidic residues. The segment covering 1434 to 1445 (RASASAEPCPAE) has biased composition (low complexity). Polar residues-rich tracts occupy residues 1460 to 1472 (TDPS…SGSQ) and 1489 to 1501 (EHTQ…GAAE). The segment covering 1726 to 1736 (AEGGLGPGLSQ) has biased composition (gly residues). 2 stretches are compositionally biased toward basic and acidic residues: residues 1752–1762 (LNRDKDPKLGE) and 1769–1778 (AQEREGKTHN). 3 repeat units span residues 1836-1851 (EAPE…SEGV), 1852-1867 (EAPE…EGEA), and 1875-1890 (EAPE…SEDV). Composition is skewed to acidic residues over residues 1836-1909 (EAPE…AEAP) and 1920-1948 (ESVE…EAAQ). Positions 1836–2244 (EAPEAEGEAQ…GEAQPESEGE (409 aa)) are 25 X 16 AA approximate tandem repeats of [ED]-[AT]-[PQ]-[ED]-[AVT]-E-[GKE]-[ED]-[AMT]-Q-[EPK]-[EAT]-[TSELP]-[EG]-[EGSQDI]-[AVIE]. The stretch at 1891–1906 (ETPEAEWEVQPESEGA) is one 2-4; approximate repeat. The stretch at 1907–1921 (EAPEAEKEAQPETES) is one 2-5 repeat. The stretch at 1923-1938 (EALETEGEDEPESEGA) is one 2-6; approximate repeat. The stretch at 1934–2017 (ESEGAEAQEA…EMQEAEEEAQ (84 aa)) forms a coiled coil. A 2-7 repeat occupies 1939 to 1954 (EAQEAEEAAQEAEGQT). Low complexity predominate over residues 1949–1958 (EAEGQTQPES). The stretch at 1955–1970 (QPESEVIESQEAEEEA) is one 2-8; approximate repeat. Composition is skewed to acidic residues over residues 1959–2022 (EVIE…ESDG), 2048–2075 (AQPE…QEAE), 2083–2108 (EDVD…EAEG), and 2117–2245 (EAPE…EGET). The 2-9; approximate repeat unit spans residues 1971–1984 (QPESEDVEALEVEV). 2 repeat units span residues 1985–2000 (ETQE…SEDV) and 2001–2016 (EAPE…EEEA). The 2-12; approximate repeat unit spans residues 2017-2031 (QPESDGVEAQPKSEG). The stretch at 2033–2048 (EAQEVEGETQKTEGDA) is one 2-13d repeat. The stretch at 2054 to 2081 (GVEAPEAEEEAQEAEGEVQEAEGEAHPE) forms a coiled coil. Residues 2056–2071 (EAPEAEEEAQEAEGEV) form a 2-14 repeat. The 2-15; approximate repeat unit spans residues 2072-2085 (QEAEGEAHPESEDV). 10 repeat units span residues 2086–2101 (DAQE…SEGV), 2102–2116 (EAPE…AEGI), 2117–2132 (EAPE…SEGI), 2133–2148 (EAPE…SEGV), 2149–2164 (EAQD…SEGI), 2165–2180 (EAQE…LEGV), 2181–2196 (EAPE…SEGI), 2197–2212 (EAPE…LEGV), 2213–2228 (EAPE…PEGV), and 2229–2244 (ETPE…SEGE). A compositionally biased stretch (polar residues) spans 2292 to 2308 (PGSQTGPSSSRASSWGN). Residues 2312–2327 (KDSENDHVLGDTRSPD) show a composition bias toward basic and acidic residues.

In terms of assembly, interacts with RP1; has a synergistic effect with RP1 in photoreceptor differentiation. As to expression, retinal-specific; expressed in photoreceptor.

It is found in the cytoplasm. Its subcellular location is the cytoskeleton. It localises to the cilium axoneme. The protein localises to the cell projection. The protein resides in the cilium. It is found in the photoreceptor outer segment. In terms of biological role, required for the differentiation of photoreceptor cells. Plays a role in the organization of outer segment of rod and cone photoreceptors. This Homo sapiens (Human) protein is Retinitis pigmentosa 1-like 1 protein (RP1L1).